Consider the following 116-residue polypeptide: NADPH-dependent 7-cyano-7-deazaguanine reductase (116 aa).

C31 (thioimide intermediate) is an active-site residue. The Proton donor role is filled by D38. Substrate contacts are provided by residues 53–55 and 72–73; these read VEL and YE.

It belongs to the GTP cyclohydrolase I family. QueF type 1 subfamily.

The protein resides in the cytoplasm. The enzyme catalyses 7-aminomethyl-7-carbaguanine + 2 NADP(+) = 7-cyano-7-deazaguanine + 2 NADPH + 3 H(+). The protein operates within tRNA modification; tRNA-queuosine biosynthesis. Functionally, catalyzes the NADPH-dependent reduction of 7-cyano-7-deazaguanine (preQ0) to 7-aminomethyl-7-deazaguanine (preQ1). The chain is NADPH-dependent 7-cyano-7-deazaguanine reductase from Chloroherpeton thalassium (strain ATCC 35110 / GB-78).